Here is a 250-residue protein sequence, read N- to C-terminus: Cellulose biosynthesis protein BcsQ (250 aa).

Position 9-16 (9-16 (VRGGVGTT)) interacts with ATP.

This sequence belongs to the BcsQ family.

Its subcellular location is the cytoplasm. Essential for cellulose biosynthesis, shown for strain 1094, a commensal, natural cellulose producer. Also shown in strain W3110 which has a restored reading frame (TAG stop codon to TTG for amino acid 6, called strain AR3110), this protein. May play a role in subcellular localization of an active cellulose biosynthesis apparatus at the bacterial cell pole. The combination of cellulose and the curli fiber network confer cohesion, elasticity and tissue-like properties to colonies. This is Cellulose biosynthesis protein BcsQ from Escherichia coli (strain K12).